A 62-amino-acid polypeptide reads, in one-letter code: DNA-directed RNA polymerase subunit Rpo10 (62 aa).

The Zn(2+) site is built by Cys6, Cys9, Cys43, and Cys44.

This sequence belongs to the archaeal Rpo10/eukaryotic RPB10 RNA polymerase subunit family. In terms of assembly, part of the RNA polymerase complex. Zn(2+) serves as cofactor.

It is found in the cytoplasm. It catalyses the reaction RNA(n) + a ribonucleoside 5'-triphosphate = RNA(n+1) + diphosphate. Its function is as follows. DNA-dependent RNA polymerase (RNAP) catalyzes the transcription of DNA into RNA using the four ribonucleoside triphosphates as substrates. The polypeptide is DNA-directed RNA polymerase subunit Rpo10 (Methanospirillum hungatei JF-1 (strain ATCC 27890 / DSM 864 / NBRC 100397 / JF-1)).